The chain runs to 126 residues: Histone H2B-alpha (126 aa).

The interval 1–34 (MSAAEKKPASKAPAGKAPRDTMKSADKKRGKNRK) is disordered. N6-acetyllysine; alternate occurs at positions 6 and 7. Glycyl lysine isopeptide (Lys-Gly) (interchain with G-Cter in SUMO); alternate cross-links involve residues Lys6 and Lys7. The residue at position 10 (Ser10) is a Phosphoserine. N6-acetyllysine is present on Lys11. Positions 17-27 (APRDTMKSADK) are enriched in basic and acidic residues. A Glycyl lysine isopeptide (Lys-Gly) (interchain with G-Cter in ubiquitin) cross-link involves residue Lys120.

Belongs to the histone H2B family. As to quaternary structure, the nucleosome is a histone octamer containing two molecules each of H2A, H2B, H3 and H4 assembled in one H3-H4 heterotetramer and two H2A-H2B heterodimers. The octamer wraps approximately 147 bp of DNA. Interacts with rik1. In terms of processing, monoubiquitinated by the rhp6/ubc2-bre1 complex to form H2BK123ub1. H2BK123ub1 gives a specific tag for epigenetic transcriptional activation and is also prerequisite for H3K4me and H3K79me formation. H2BK123ub1 also modulates the formation of double-strand breaks during meiosis and is a prerequisite for DNA-damage checkpoint activation. Phosphorylated by shk1 to form H2BS10ph during progression through meiotic prophase. May be correlated with chromosome condensation. Post-translationally, acetylation of N-terminal lysines and particularly formation of H2BK11ac has a positive effect on transcription. In terms of processing, sumoylation to form H2BK6su or H2BK7su occurs preferentially near the telomeres and represses gene transcription.

Its subcellular location is the nucleus. It is found in the chromosome. Its function is as follows. Core component of nucleosome. Nucleosomes wrap and compact DNA into chromatin, limiting DNA accessibility to the cellular machineries which require DNA as a template. Histones thereby play a central role in transcription regulation, DNA repair, DNA replication and chromosomal stability. DNA accessibility is regulated via a complex set of post-translational modifications of histones, also called histone code, and nucleosome remodeling. In Schizosaccharomyces pombe (strain 972 / ATCC 24843) (Fission yeast), this protein is Histone H2B-alpha (htb1).